Consider the following 534-residue polypeptide: Glucans biosynthesis protein D (534 aa).

Residues 1–28 (MYRRDFLKSVTAAWVAFGLPNPLGGAFA) constitute a signal peptide (tat-type signal).

It belongs to the OpgD/OpgG family. Predicted to be exported by the Tat system. The position of the signal peptide cleavage has not been experimentally proven.

It localises to the periplasm. It functions in the pathway glycan metabolism; osmoregulated periplasmic glucan (OPG) biosynthesis. Its function is as follows. Probably involved in the control of the structural glucose backbone of osmoregulated periplasmic glucans (OPGs). In Xylella fastidiosa (strain M23), this protein is Glucans biosynthesis protein D.